The primary structure comprises 429 residues: Adenylosuccinate synthetase (429 aa).

GTP is bound by residues 12-18 and 40-42; these read GDEGKGK and GHT. Residue aspartate 13 is the Proton acceptor of the active site. Positions 13 and 40 each coordinate Mg(2+). IMP is bound by residues 13-16, 38-41, threonine 129, arginine 143, glutamine 223, threonine 238, and arginine 302; these read DEGK and NAGH. The Proton donor role is filled by histidine 41. 298–304 lines the substrate pocket; it reads TVTGRKR. GTP contacts are provided by residues arginine 304, 330 to 332, and 412 to 414; these read KLD and STS.

This sequence belongs to the adenylosuccinate synthetase family. In terms of assembly, homodimer. Requires Mg(2+) as cofactor.

Its subcellular location is the cytoplasm. The enzyme catalyses IMP + L-aspartate + GTP = N(6)-(1,2-dicarboxyethyl)-AMP + GDP + phosphate + 2 H(+). It functions in the pathway purine metabolism; AMP biosynthesis via de novo pathway; AMP from IMP: step 1/2. Its function is as follows. Plays an important role in the de novo pathway of purine nucleotide biosynthesis. Catalyzes the first committed step in the biosynthesis of AMP from IMP. The chain is Adenylosuccinate synthetase from Sphingopyxis alaskensis (strain DSM 13593 / LMG 18877 / RB2256) (Sphingomonas alaskensis).